The sequence spans 352 residues: GTPase Obg (352 aa).

Positions 1–159 (MQFIDQAEIQ…RMLRLELKLL (159 aa)) constitute an Obg domain. In terms of domain architecture, OBG-type G spans 160 to 330 (AEVGIIGLPN…LMQEIWGLLE (171 aa)). GTP contacts are provided by residues 166-173 (GLPNAGKS), 191-195 (FTTLV), 213-216 (DIPG), 280-283 (NKVD), and 311-313 (SAV). Mg(2+) contacts are provided by Ser173 and Thr193.

It belongs to the TRAFAC class OBG-HflX-like GTPase superfamily. OBG GTPase family. In terms of assembly, monomer. The cofactor is Mg(2+).

The protein localises to the cytoplasm. Its function is as follows. An essential GTPase which binds GTP, GDP and possibly (p)ppGpp with moderate affinity, with high nucleotide exchange rates and a fairly low GTP hydrolysis rate. Plays a role in control of the cell cycle, stress response, ribosome biogenesis and in those bacteria that undergo differentiation, in morphogenesis control. The chain is GTPase Obg from Trichodesmium erythraeum (strain IMS101).